The sequence spans 535 residues: Lecithin-cholesterol acyltransferase-like 4 (535 aa).

At Ser2 the chain carries N-acetylserine. Residue Ser182 is the Acyl-ester intermediate of the active site. Active-site charge relay system residues include Asp391 and His416. Residues 488-505 (STVNSISVSQPGDDQNPQ) show a composition bias toward polar residues. Residues 488–507 (STVNSISVSQPGDDQNPQAE) form a disordered region.

This sequence belongs to the AB hydrolase superfamily. Lipase family.

The sequence is that of Lecithin-cholesterol acyltransferase-like 4 (LCAT4) from Arabidopsis thaliana (Mouse-ear cress).